A 59-amino-acid chain; its full sequence is Large ribosomal subunit protein bL32 (59 aa).

The segment at 1–34 (MAVQKSKVTRSRRGQRRSHDALTGPTLSVDKTTG) is disordered. A compositionally biased stretch (basic residues) spans 7 to 16 (KVTRSRRGQR).

Belongs to the bacterial ribosomal protein bL32 family.

The sequence is that of Large ribosomal subunit protein bL32 from Marinomonas sp. (strain MWYL1).